The following is a 235-amino-acid chain: Ribosome maturation factor RimM (235 aa).

A compositionally biased stretch (basic and acidic residues) spans 1 to 19 (MKHEEANKEIGGRGAEGQR). The disordered stretch occupies residues 1 to 49 (MKHEEANKEIGGRGAEGQRSKRVGGNSKIQNIQSPAPNPQPIVPNTQSP). Residues 150–230 (EDEYHVLDLI…RIEITPPPGL (81 aa)) form the PRC barrel domain.

It belongs to the RimM family. Binds ribosomal protein uS19.

It localises to the cytoplasm. In terms of biological role, an accessory protein needed during the final step in the assembly of 30S ribosomal subunit, possibly for assembly of the head region. Essential for efficient processing of 16S rRNA. May be needed both before and after RbfA during the maturation of 16S rRNA. It has affinity for free ribosomal 30S subunits but not for 70S ribosomes. This chain is Ribosome maturation factor RimM, found in Nostoc punctiforme (strain ATCC 29133 / PCC 73102).